The sequence spans 306 residues: UDP-N-acetylenolpyruvoylglucosamine reductase (306 aa).

The 166-residue stretch at 34–199 (KSGGAAEWLF…VAATFRGHAE (166 aa)) folds into the FAD-binding PCMH-type domain. Arg179 is an active-site residue. The interval 215–234 (REASQPLRSRTGGSTFKNPQ) is disordered. The segment covering 220-232 (PLRSRTGGSTFKN) has biased composition (polar residues). The Proton donor role is filled by Ser228. Residue Glu298 is part of the active site.

It belongs to the MurB family. It depends on FAD as a cofactor.

It is found in the cytoplasm. It carries out the reaction UDP-N-acetyl-alpha-D-muramate + NADP(+) = UDP-N-acetyl-3-O-(1-carboxyvinyl)-alpha-D-glucosamine + NADPH + H(+). It functions in the pathway cell wall biogenesis; peptidoglycan biosynthesis. In terms of biological role, cell wall formation. The polypeptide is UDP-N-acetylenolpyruvoylglucosamine reductase (Rhizorhabdus wittichii (strain DSM 6014 / CCUG 31198 / JCM 15750 / NBRC 105917 / EY 4224 / RW1) (Sphingomonas wittichii)).